Consider the following 361-residue polypeptide: Chorismate synthase (361 aa).

The NADP(+) site is built by arginine 48 and arginine 54. Residues 125-127 (RSS), 238-239 (NA), glycine 278, 293-297 (KPTSS), and arginine 319 contribute to the FMN site.

Belongs to the chorismate synthase family. Homotetramer. FMNH2 serves as cofactor.

It catalyses the reaction 5-O-(1-carboxyvinyl)-3-phosphoshikimate = chorismate + phosphate. It participates in metabolic intermediate biosynthesis; chorismate biosynthesis; chorismate from D-erythrose 4-phosphate and phosphoenolpyruvate: step 7/7. Its function is as follows. Catalyzes the anti-1,4-elimination of the C-3 phosphate and the C-6 proR hydrogen from 5-enolpyruvylshikimate-3-phosphate (EPSP) to yield chorismate, which is the branch point compound that serves as the starting substrate for the three terminal pathways of aromatic amino acid biosynthesis. This reaction introduces a second double bond into the aromatic ring system. The sequence is that of Chorismate synthase from Pectobacterium atrosepticum (strain SCRI 1043 / ATCC BAA-672) (Erwinia carotovora subsp. atroseptica).